Consider the following 262-residue polypeptide: Hydroxyethylthiazole kinase (262 aa).

Met-39 is a binding site for substrate. Residues Lys-115 and Thr-160 each contribute to the ATP site. Gly-187 serves as a coordination point for substrate.

It belongs to the Thz kinase family. It depends on Mg(2+) as a cofactor.

The catalysed reaction is 5-(2-hydroxyethyl)-4-methylthiazole + ATP = 4-methyl-5-(2-phosphooxyethyl)-thiazole + ADP + H(+). Its pathway is cofactor biosynthesis; thiamine diphosphate biosynthesis; 4-methyl-5-(2-phosphoethyl)-thiazole from 5-(2-hydroxyethyl)-4-methylthiazole: step 1/1. Its function is as follows. Catalyzes the phosphorylation of the hydroxyl group of 4-methyl-5-beta-hydroxyethylthiazole (THZ). The chain is Hydroxyethylthiazole kinase from Staphylococcus epidermidis (strain ATCC 12228 / FDA PCI 1200).